Consider the following 194-residue polypeptide: Isopentenyl-diphosphate Delta-isomerase (194 aa).

H23 and H30 together coordinate Mn(2+). The region spanning 28-162 is the Nudix hydrolase domain; sequence PLHLAFSCYV…TTDISPWCRQ (135 aa). C65 is a catalytic residue. H67 serves as a coordination point for Mn(2+). E85 is a binding site for Mg(2+). Mn(2+)-binding residues include E112 and E114. E114 is an active-site residue.

The protein belongs to the IPP isomerase type 1 family. Mg(2+) is required as a cofactor. Mn(2+) serves as cofactor.

It localises to the cytoplasm. The enzyme catalyses isopentenyl diphosphate = dimethylallyl diphosphate. The protein operates within isoprenoid biosynthesis; dimethylallyl diphosphate biosynthesis; dimethylallyl diphosphate from isopentenyl diphosphate: step 1/1. In terms of biological role, catalyzes the 1,3-allylic rearrangement of the homoallylic substrate isopentenyl (IPP) to its highly electrophilic allylic isomer, dimethylallyl diphosphate (DMAPP). The sequence is that of Isopentenyl-diphosphate Delta-isomerase from Saccharopolyspora erythraea (strain ATCC 11635 / DSM 40517 / JCM 4748 / NBRC 13426 / NCIMB 8594 / NRRL 2338).